The chain runs to 357 residues: Mitogen-activated protein kinase HOG1 (357 aa).

In terms of domain architecture, Protein kinase spans 20–299 (YSDLQPVGMG…ATEALSHDYL (280 aa)). ATP-binding positions include 26-34 (VGMGAFGLV) and Lys49. Asp141 serves as the catalytic Proton acceptor. Thr171 is modified (phosphothreonine). Residues 171-173 (TGY) carry the TXY motif. Phosphotyrosine is present on Tyr173.

Belongs to the protein kinase superfamily. Ser/Thr protein kinase family. MAP kinase subfamily. HOG1 sub-subfamily. The cofactor is Mg(2+). Dually phosphorylated on Thr-171 and Tyr-173, which activates the enzyme.

The protein localises to the cytoplasm. Its subcellular location is the nucleus. The catalysed reaction is L-seryl-[protein] + ATP = O-phospho-L-seryl-[protein] + ADP + H(+). It carries out the reaction L-threonyl-[protein] + ATP = O-phospho-L-threonyl-[protein] + ADP + H(+). With respect to regulation, activated by tyrosine and threonine phosphorylation. Proline-directed serine/threonine-protein kinase involved in a signal transduction pathway that is activated by changes in the osmolarity of the extracellular environment. Controls osmotic regulation of transcription of target genes. The chain is Mitogen-activated protein kinase HOG1 (HOG1) from Colletotrichum orbiculare (strain 104-T / ATCC 96160 / CBS 514.97 / LARS 414 / MAFF 240422) (Cucumber anthracnose fungus).